The chain runs to 304 residues: Ribonuclease Z (304 aa).

Positions 63, 65, 67, 68, 143, 213, and 271 each coordinate Zn(2+). Residue D67 is the Proton acceptor of the active site.

This sequence belongs to the RNase Z family. Homodimer. It depends on Zn(2+) as a cofactor.

It catalyses the reaction Endonucleolytic cleavage of RNA, removing extra 3' nucleotides from tRNA precursor, generating 3' termini of tRNAs. A 3'-hydroxy group is left at the tRNA terminus and a 5'-phosphoryl group is left at the trailer molecule.. Zinc phosphodiesterase, which displays some tRNA 3'-processing endonuclease activity. Probably involved in tRNA maturation, by removing a 3'-trailer from precursor tRNA. The chain is Ribonuclease Z from Porphyromonas gingivalis (strain ATCC 33277 / DSM 20709 / CIP 103683 / JCM 12257 / NCTC 11834 / 2561).